A 325-amino-acid polypeptide reads, in one-letter code: Lipid droplet-associated hydrolase (325 aa).

Serine 139 acts as the Nucleophile in catalysis. Active-site charge relay system residues include aspartate 271 and histidine 300.

The protein belongs to the AB hydrolase superfamily. LDAH family.

Its subcellular location is the lipid droplet. It localises to the endoplasmic reticulum. The enzyme catalyses a cholesterol ester + H2O = cholesterol + a fatty acid + H(+). In terms of biological role, probable serine lipid hydrolase associated with lipid droplets. Has low cholesterol esterase activity. Appears to lack triglyceride lipase activity. Involved in cholesterol and triglyceride homeostasis; stimulates cellular triglyceride accumulation and cellular cholesterol release. Acts antagonistically with PNPLA2/ATGL in regulation of cellular lipid stores. May regulate triglyceride accumulation indirectly through stimulation of PNPLA2/ATGL ubiquitination and proteasomal degradation. Promotes microtubule-dependent lipid droplet fusion. Highly expressed in macrophage-rich areas in atherosclerotic lesions, suggesting that it could promote cholesterol ester turnover in macrophages. This chain is Lipid droplet-associated hydrolase, found in Pongo abelii (Sumatran orangutan).